Reading from the N-terminus, the 413-residue chain is NAD-dependent dihydropyrimidine dehydrogenase subunit PreT homolog (413 aa).

NAD(+) is bound at residue Glu287.

The protein belongs to the NADH dehydrogenase family. Heterotetramer of 2 PreA and 2 PreT subunits.

It catalyses the reaction 5,6-dihydrouracil + NAD(+) = uracil + NADH + H(+). The enzyme catalyses 5,6-dihydrothymine + NAD(+) = thymine + NADH + H(+). Its function is as follows. Involved in pyrimidine base degradation. Catalyzes physiologically the reduction of uracil to 5,6-dihydrouracil (DHU) by using NADH as a specific cosubstrate. It also catalyzes the reverse reaction and the reduction of thymine to 5,6-dihydrothymine (DHT). This Salmonella typhi protein is NAD-dependent dihydropyrimidine dehydrogenase subunit PreT homolog (preT).